The primary structure comprises 339 residues: Lipoyl synthase (339 aa).

The disordered stretch occupies residues 13–35 (RPKLDAPARPRHPEKAHRPDTAI). [4Fe-4S] cluster-binding residues include Cys68, Cys73, Cys79, Cys94, Cys98, Cys101, and Ser307. The Radical SAM core domain maps to 80–296 (WEKRHATFMI…ETTAYAKGFL (217 aa)).

The protein belongs to the radical SAM superfamily. Lipoyl synthase family. It depends on [4Fe-4S] cluster as a cofactor.

It is found in the cytoplasm. It catalyses the reaction [[Fe-S] cluster scaffold protein carrying a second [4Fe-4S](2+) cluster] + N(6)-octanoyl-L-lysyl-[protein] + 2 oxidized [2Fe-2S]-[ferredoxin] + 2 S-adenosyl-L-methionine + 4 H(+) = [[Fe-S] cluster scaffold protein] + N(6)-[(R)-dihydrolipoyl]-L-lysyl-[protein] + 4 Fe(3+) + 2 hydrogen sulfide + 2 5'-deoxyadenosine + 2 L-methionine + 2 reduced [2Fe-2S]-[ferredoxin]. It functions in the pathway protein modification; protein lipoylation via endogenous pathway; protein N(6)-(lipoyl)lysine from octanoyl-[acyl-carrier-protein]: step 2/2. Its function is as follows. Catalyzes the radical-mediated insertion of two sulfur atoms into the C-6 and C-8 positions of the octanoyl moiety bound to the lipoyl domains of lipoate-dependent enzymes, thereby converting the octanoylated domains into lipoylated derivatives. The polypeptide is Lipoyl synthase (Methylorubrum extorquens (strain CM4 / NCIMB 13688) (Methylobacterium extorquens)).